Consider the following 206-residue polypeptide: Ribosomal RNA small subunit methyltransferase G (206 aa).

Residues G74, L79, 125–126, and R140 contribute to the S-adenosyl-L-methionine site; that span reads VE.

Belongs to the methyltransferase superfamily. RNA methyltransferase RsmG family.

The protein localises to the cytoplasm. It carries out the reaction guanosine(527) in 16S rRNA + S-adenosyl-L-methionine = N(7)-methylguanosine(527) in 16S rRNA + S-adenosyl-L-homocysteine. Functionally, specifically methylates the N7 position of guanine in position 527 of 16S rRNA. The chain is Ribosomal RNA small subunit methyltransferase G from Shewanella sp. (strain ANA-3).